Here is a 100-residue protein sequence, read N- to C-terminus: Small ribosomal subunit protein uS14c (100 aa).

It belongs to the universal ribosomal protein uS14 family. In terms of assembly, part of the 30S ribosomal subunit.

Its subcellular location is the plastid. The protein resides in the chloroplast. Functionally, binds 16S rRNA, required for the assembly of 30S particles. This Liriodendron tulipifera (Tuliptree) protein is Small ribosomal subunit protein uS14c.